Here is a 346-residue protein sequence, read N- to C-terminus: Methylthioribose-1-phosphate isomerase (346 aa).

Residues 54–56, Arg91, and Gln192 each bind substrate; that span reads RGA. The active-site Proton donor is Asp233. 243 to 244 provides a ligand contact to substrate; sequence NK.

The protein belongs to the eIF-2B alpha/beta/delta subunits family. MtnA subfamily.

The enzyme catalyses 5-(methylsulfanyl)-alpha-D-ribose 1-phosphate = 5-(methylsulfanyl)-D-ribulose 1-phosphate. It participates in amino-acid biosynthesis; L-methionine biosynthesis via salvage pathway; L-methionine from S-methyl-5-thio-alpha-D-ribose 1-phosphate: step 1/6. Functionally, catalyzes the interconversion of methylthioribose-1-phosphate (MTR-1-P) into methylthioribulose-1-phosphate (MTRu-1-P). The chain is Methylthioribose-1-phosphate isomerase from Yersinia enterocolitica serotype O:8 / biotype 1B (strain NCTC 13174 / 8081).